Reading from the N-terminus, the 322-residue chain is Phosphatidylserine decarboxylase proenzyme (322 aa).

Active-site charge relay system; for autoendoproteolytic cleavage activity residues include D90, H147, and S254. Catalysis depends on S254, which acts as the Schiff-base intermediate with substrate; via pyruvic acid; for decarboxylase activity. The residue at position 254 (S254) is a Pyruvic acid (Ser); by autocatalysis. A disordered region spans residues 296-322; that stretch reads EPAPLPAEEIKAEHDASPLVDNKKDDT. Basic and acidic residues predominate over residues 303 to 322; it reads EEIKAEHDASPLVDNKKDDT.

Belongs to the phosphatidylserine decarboxylase family. PSD-B subfamily. Prokaryotic type I sub-subfamily. Heterodimer of a large membrane-associated beta subunit and a small pyruvoyl-containing alpha subunit. It depends on pyruvate as a cofactor. Is synthesized initially as an inactive proenzyme. Formation of the active enzyme involves a self-maturation process in which the active site pyruvoyl group is generated from an internal serine residue via an autocatalytic post-translational modification. Two non-identical subunits are generated from the proenzyme in this reaction, and the pyruvate is formed at the N-terminus of the alpha chain, which is derived from the carboxyl end of the proenzyme. The autoendoproteolytic cleavage occurs by a canonical serine protease mechanism, in which the side chain hydroxyl group of the serine supplies its oxygen atom to form the C-terminus of the beta chain, while the remainder of the serine residue undergoes an oxidative deamination to produce ammonia and the pyruvoyl prosthetic group on the alpha chain. During this reaction, the Ser that is part of the protease active site of the proenzyme becomes the pyruvoyl prosthetic group, which constitutes an essential element of the active site of the mature decarboxylase.

The protein resides in the cell membrane. The catalysed reaction is a 1,2-diacyl-sn-glycero-3-phospho-L-serine + H(+) = a 1,2-diacyl-sn-glycero-3-phosphoethanolamine + CO2. It functions in the pathway phospholipid metabolism; phosphatidylethanolamine biosynthesis; phosphatidylethanolamine from CDP-diacylglycerol: step 2/2. Its function is as follows. Catalyzes the formation of phosphatidylethanolamine (PtdEtn) from phosphatidylserine (PtdSer). The polypeptide is Phosphatidylserine decarboxylase proenzyme (Salmonella dublin (strain CT_02021853)).